Here is a 220-residue protein sequence, read N- to C-terminus: Fructose-6-phosphate aldolase (220 aa).

Lys85 functions as the Schiff-base intermediate with substrate in the catalytic mechanism.

The protein belongs to the transaldolase family. Type 3A subfamily. Homodecamer.

The protein resides in the cytoplasm. It catalyses the reaction beta-D-fructose 6-phosphate = dihydroxyacetone + D-glyceraldehyde 3-phosphate. In terms of biological role, catalyzes the reversible formation of fructose 6-phosphate from dihydroxyacetone and D-glyceraldehyde 3-phosphate via an aldolization reaction. This chain is Fructose-6-phosphate aldolase, found in Enterobacter sp. (strain 638).